An 89-amino-acid polypeptide reads, in one-letter code: Small ribosomal subunit protein uS17 (89 aa).

Belongs to the universal ribosomal protein uS17 family. As to quaternary structure, part of the 30S ribosomal subunit.

In terms of biological role, one of the primary rRNA binding proteins, it binds specifically to the 5'-end of 16S ribosomal RNA. In Xylella fastidiosa (strain M12), this protein is Small ribosomal subunit protein uS17.